Consider the following 194-residue polypeptide: Interferon alpha (194 aa).

Positions 1–23 (MALPSSFLVALVALGCNSVCSLG) are cleaved as a signal peptide. 2 disulfide bridges follow: C24–C123 and C52–C166. N102 carries N-linked (GlcNAc...) asparagine glycosylation.

It belongs to the alpha/beta interferon family.

Its subcellular location is the secreted. In terms of biological role, produced by macrophages, IFN-alpha have antiviral activities. Interferon stimulates the production of two enzymes: a protein kinase and an oligoadenylate synthetase. The polypeptide is Interferon alpha (Felis catus (Cat)).